The following is a 423-amino-acid chain: Flavohemoprotein B (423 aa).

The Globin domain occupies 1–136; it reads MLSQKSIQII…VAQAFMDAEE (136 aa). H83 provides a ligand contact to heme b. Residues Y93 and E135 each act as charge relay system in the active site. Residues 149-423 are reductase; sequence WKDTREFVVD…LRGVKNIIEN (275 aa). An FAD-binding FR-type domain is found at 150–268; that stretch reads KDTREFVVDR…SVPAGDFVVN (119 aa). Residues Y188 and 212–215 contribute to the FAD site; that span reads RHYS. Position 281 to 286 (281 to 286) interacts with NADP(+); sequence GVGINP. 400-403 lines the FAD pocket; sequence LFGP.

Belongs to the globin family. Two-domain flavohemoproteins subfamily. It in the C-terminal section; belongs to the flavoprotein pyridine nucleotide cytochrome reductase family. It depends on FAD as a cofactor. Heme b serves as cofactor.

It localises to the cytoplasm. The enzyme catalyses 2 nitric oxide + NADPH + 2 O2 = 2 nitrate + NADP(+) + H(+). It catalyses the reaction 2 nitric oxide + NADH + 2 O2 = 2 nitrate + NAD(+) + H(+). In terms of biological role, is involved in NO detoxification in an aerobic process, termed nitric oxide dioxygenase (NOD) reaction that utilizes O(2) and NAD(P)H to convert NO to nitrate, which protects the cell from various noxious nitrogen compounds. Therefore, plays a central role in the inducible response to nitrosative stress. Functionally, in the presence of oxygen and NADH, it has NADH oxidase activity, which leads to the generation of superoxide and H(2)O(2). Under anaerobic conditions, it also exhibits nitric oxide reductase and FAD reductase activities. However, all these reactions are much lower than NOD activity. This is Flavohemoprotein B (fhbB) from Dictyostelium discoideum (Social amoeba).